The chain runs to 119 residues: Large ribosomal subunit protein bL20 (119 aa).

This sequence belongs to the bacterial ribosomal protein bL20 family.

Its function is as follows. Binds directly to 23S ribosomal RNA and is necessary for the in vitro assembly process of the 50S ribosomal subunit. It is not involved in the protein synthesizing functions of that subunit. The protein is Large ribosomal subunit protein bL20 of Caldicellulosiruptor bescii (strain ATCC BAA-1888 / DSM 6725 / KCTC 15123 / Z-1320) (Anaerocellum thermophilum).